Here is a 180-residue protein sequence, read N- to C-terminus: ATP-dependent protease subunit HslV (180 aa).

Residue Thr2 is part of the active site. Na(+)-binding residues include Gly158, Cys161, and Thr164.

The protein belongs to the peptidase T1B family. HslV subfamily. As to quaternary structure, a double ring-shaped homohexamer of HslV is capped on each side by a ring-shaped HslU homohexamer. The assembly of the HslU/HslV complex is dependent on binding of ATP.

Its subcellular location is the cytoplasm. It carries out the reaction ATP-dependent cleavage of peptide bonds with broad specificity.. With respect to regulation, allosterically activated by HslU binding. Its function is as follows. Protease subunit of a proteasome-like degradation complex believed to be a general protein degrading machinery. This Baumannia cicadellinicola subsp. Homalodisca coagulata protein is ATP-dependent protease subunit HslV.